Here is a 180-residue protein sequence, read N- to C-terminus: Bifunctional protein PyrR (180 aa).

Residues 39-40, 103-111, and Arg136 contribute to the substrate site; these read TR and DDVLYTGRT. Residues 99–111 carry the PRPP-binding motif; it reads VILIDDVLYTGRT.

Belongs to the purine/pyrimidine phosphoribosyltransferase family. PyrR subfamily. In terms of assembly, homodimer and homohexamer; in equilibrium.

It carries out the reaction UMP + diphosphate = 5-phospho-alpha-D-ribose 1-diphosphate + uracil. Its function is as follows. Regulates transcriptional attenuation of the pyrimidine nucleotide (pyr) operon by binding in a uridine-dependent manner to specific sites on pyr mRNA. This disrupts an antiterminator hairpin in the RNA and favors formation of a downstream transcription terminator, leading to a reduced expression of downstream genes. In terms of biological role, also displays a weak uracil phosphoribosyltransferase activity which is not physiologically significant. This chain is Bifunctional protein PyrR, found in Halalkalibacterium halodurans (strain ATCC BAA-125 / DSM 18197 / FERM 7344 / JCM 9153 / C-125) (Bacillus halodurans).